Here is a 33-residue protein sequence, read N- to C-terminus: GFLDSFKNAMIGVAKSAGKTALNTLACKIDKTC.

Cys-27 and Cys-33 form a disulfide bridge.

As to expression, expressed by the skin glands.

Its subcellular location is the secreted. Its function is as follows. Has antibacterial activity against the Gram-positive bacterium S.aureus ATCC 25923 and the Gram-negative bacterium E.coli ATCC 25726. The polypeptide is Brevinin-2PTd (Pulchrana picturata (Malaysian fire frog)).